Consider the following 292-residue polypeptide: D-tagatose-1,6-bisphosphate aldolase subunit KbaY (292 aa).

The active-site Proton donor is the aspartate 82. 2 residues coordinate Zn(2+): histidine 83 and histidine 180. Glycine 181 provides a ligand contact to dihydroxyacetone phosphate. Histidine 208 contacts Zn(2+). Dihydroxyacetone phosphate contacts are provided by residues 209–211 (GAS) and 230–233 (NVAT).

Belongs to the class II fructose-bisphosphate aldolase family. TagBP aldolase KbaY subfamily. In terms of assembly, homotetramer. Forms a complex with KbaZ. It depends on Zn(2+) as a cofactor.

It catalyses the reaction D-tagatofuranose 1,6-bisphosphate = D-glyceraldehyde 3-phosphate + dihydroxyacetone phosphate. It participates in carbohydrate metabolism; D-tagatose 6-phosphate degradation; D-glyceraldehyde 3-phosphate and glycerone phosphate from D-tagatose 6-phosphate: step 2/2. Its function is as follows. Catalytic subunit of the tagatose-1,6-bisphosphate aldolase KbaYZ, which catalyzes the reversible aldol condensation of dihydroxyacetone phosphate (DHAP or glycerone-phosphate) with glyceraldehyde 3-phosphate (G3P) to produce tagatose 1,6-bisphosphate (TBP). Requires KbaZ subunit for full activity and stability. The polypeptide is D-tagatose-1,6-bisphosphate aldolase subunit KbaY (Enterobacter sp. (strain 638)).